The following is a 265-amino-acid chain: ETS-related transcription factor Elf-5 (265 aa).

The region spanning 43-129 is the PNT domain; it reads YPAFEHQTAC…FILQNIRTQG (87 aa). Positions 173–254 form a DNA-binding region, ETS; it reads SHLWEFVRDL…VDRRLVYKFG (82 aa).

This sequence belongs to the ETS family. In terms of tissue distribution, expressed exclusively in tissues with a high content of epithelial cells. Highly expressed in salivary gland, mammary gland, kidney and prostate. Weakly expressed in placenta and lung. Isoform 1 and isoform 2 are differentially expressed in different tissues. In the kidney, only isoform 1 was expressed, while prostate expressed both isoforms, with levels of isoform 2 being higher. Expression is up-regulated during keratinocyte differentiation. Several epithelial carcinoma cell lines showed lack of expression.

The protein localises to the nucleus. In terms of biological role, transcriptionally activator that may play a role in regulating the later stages of keratinocytes terminal differentiation. Isoform 2 binds to DNA sequences containing the consensus nucleotide core sequence GGA[AT]. Transcriptionally activates SPRR2A and the parotid gland-specific PSP promoters. The chain is ETS-related transcription factor Elf-5 (ELF5) from Homo sapiens (Human).